A 1165-amino-acid chain; its full sequence is Immunoglobulin superfamily member 3 (1165 aa).

Positions 1–20 (MGTAAGLLLAALLLAGTSWA) are cleaved as a signal peptide. Residues 21–1095 (QREVNIQQGP…LQSTICANDA (1075 aa)) lie on the Extracellular side of the membrane. Ig-like C2-type domains lie at 22-139 (REVN…AKMN), 144-262 (PDTL…WFPL), 276-386 (PTDK…RGPS), 406-527 (PLRT…WQLL), 545-661 (FAVT…WTQL), 678-800 (PRLQ…EEAS), 810-934 (PDAN…WYKR), and 951-1067 (PALQ…WYLL). 2 cysteine pairs are disulfide-bonded: Cys43-Cys121 and Cys168-Cys246. The EWI motif motif lies at 250-252 (EWI). Intrachain disulfides connect Cys302–Cys376, Cys432–Cys511, Cys566–Cys645, Cys701–Cys779, Cys835–Cys918, and Cys974–Cys1051. A helical membrane pass occupies residues 1096–1116 (LFYLVFFYPFPIFGILIITIL). Over 1117 to 1165 (LVRFRHRPTSKPGEGKNGVPLLWIKEPHLNYSPTCLEPPVLSIHPGTID) the chain is Cytoplasmic.

The protein resides in the membrane. The polypeptide is Immunoglobulin superfamily member 3 (igsf3) (Xenopus laevis (African clawed frog)).